The chain runs to 124 residues: Fluoride-specific ion channel FluC 1 (124 aa).

The next 4 helical transmembrane spans lie at 7–27 (IQSKQLYKIFLLIVGSILGAI), 32–52 (LNNYFWVNISGAALLGLIVGL), 58–78 (IQFFLVIGFCGSFTTFSGWIL), and 93–113 (AGLICSNLLGGFTALSVTFWI). 2 residues coordinate Na(+): glycine 68 and threonine 71.

This sequence belongs to the fluoride channel Fluc/FEX (TC 1.A.43) family.

It is found in the cell inner membrane. It carries out the reaction fluoride(in) = fluoride(out). Its activity is regulated as follows. Na(+) is not transported, but it plays an essential structural role and its presence is essential for fluoride channel function. In terms of biological role, fluoride-specific ion channel. Important for reducing fluoride concentration in the cell, thus reducing its toxicity. This chain is Fluoride-specific ion channel FluC 1, found in Prochlorococcus marinus (strain SARG / CCMP1375 / SS120).